The chain runs to 2669 residues: Nucleosome-remodeling factor subunit NURF301 (2669 aa).

The span at 1–12 shows a compositional bias: basic residues; it reads MSGRGSRKRGRP. Residues 1–121 are required for function in nucleosome sliding; the sequence is MSGRGSRKRG…EEDKSDNEDD (121 aa). Residues 1–125 form a disordered region; that stretch reads MSGRGSRKRG…SDNEDDMLLT (125 aa). A DNA-binding region (a.T hook) is located at residues 6-18; it reads SRKRGRPPKTPNE. Over residues 38 to 56 the composition is skewed to polar residues; that stretch reads GKSQPSTPSASRGISPQSD. Phosphoserine is present on residues serine 40, serine 52, serine 55, serine 59, and serine 62. Basic residues predominate over residues 66–82; that stretch reads HTNRSRGSAAKRGRGRK. Residues 109–125 are compositionally biased toward acidic residues; it reads GDSEEDKSDNEDDMLLT. Residues 188–248 enclose the DDT domain; that stretch reads NTHVLRALSI…LKAILREEDA (61 aa). Residues 339-386 form a PHD-type 1 zinc finger; the sequence is DDHCRVCHRLGDLLCCETCPAVYHLECVDPPMNDVPTEDWQCGLCRSH. Positions 460-515 form a coiled coil; sequence RLHSQITERRDEIERQMKLTETLTNEHKHTKRSVIEIEQEAKNELLEKEVLDEDEK. The disordered stretch occupies residues 505-538; that stretch reads LEKEVLDEDEKDGDAKSESQSIEGTKKQEECKMV. Residues 528–537 are compositionally biased toward basic and acidic residues; that stretch reads GTKKQEECKM. Residues 688–720 adopt a coiled-coil conformation; sequence LQRITSAEREERKKLEKREKRERDDEEERNRLA. Disordered stretches follow at residues 1026-1048, 1135-1159, and 1406-1425; these read EGKRESTQVAVDDSEEGKPAESE, TGLNSGNAEDVDMTPGWRRKRNQKS, and RSGLRKRKRAESPQPTEPQI. At serine 1417 the chain carries Phosphoserine. Threonine 1527 is modified (phosphothreonine). Low complexity predominate over residues 1559–1590; the sequence is SRTGGANTAAAAASPTVGGSTSTQSNPSTSTP. Disordered regions lie at residues 1559 to 1596, 2181 to 2203, and 2283 to 2307; these read SRTGGANTAAAAASPTVGGSTSTQSNPSTSTPHKVQII, INNGDDQENSKCAETENSNITTN, and TNEWETCSRGSVNEEALTPSRQTDD. Residues 2283–2293 show a composition bias toward polar residues; the sequence is TNEWETCSRGS. Residues 2338–2373 adopt a coiled-coil conformation; that stretch reads KNDEVAELGEQKQSQLERHKELLKKNILRKRSLLER. The segment at 2382 to 2432 is disordered; the sequence is DVKTKVQRHVRPLSNASPDEQSENERSGEPNLDFKRTEVQNPRHGAGRPKK. Serine 2395, serine 2398, and serine 2403 each carry phosphoserine. A compositionally biased stretch (basic and acidic residues) spans 2404–2419; the sequence is ENERSGEPNLDFKRTE. The PHD-type 2 zinc finger occupies 2481–2546; the sequence is EFICIDCKRA…EYVCPECQRK (66 aa). Positions 2556–2660 constitute a Bromo domain; it reads KLTSNDVEEL…SYFVQKIKNF (105 aa).

It belongs to the BPTF family. Component of the NURF complex composed of Caf1-55, E(bx), Nurf-38 and Iswi. Interacts with Trl. Interacts with histone H3-K4Me3.

It is found in the nucleus. Histone-binding component of NURF (nucleosome remodeling factor), a complex which catalyzes ATP-dependent nucleosome sliding and facilitates transcription of chromatin. Specifically recognizes H3 tails trimethylated on 'Lys-4' (H3K4me3), which mark transcription start sites of virtually all active genes. Required for homeotic gene expression, proper larval blood cell development, normal male X chromosome morphology, ecdysteroid signaling and metamorphosis. This Drosophila melanogaster (Fruit fly) protein is Nucleosome-remodeling factor subunit NURF301 (E(bx)).